Here is a 612-residue protein sequence, read N- to C-terminus: UvrABC system protein C (612 aa).

Residues 11–90 (TASGVYLMKG…IKKYRPRYNI (80 aa)) form the GIY-YIG domain. In terms of domain architecture, UVR spans 200–235 (SEVVESLQHQMAAAAERMAFEEAARLRDQLRAIEQT).

This sequence belongs to the UvrC family. Interacts with UvrB in an incision complex.

It is found in the cytoplasm. The UvrABC repair system catalyzes the recognition and processing of DNA lesions. UvrC both incises the 5' and 3' sides of the lesion. The N-terminal half is responsible for the 3' incision and the C-terminal half is responsible for the 5' incision. The chain is UvrABC system protein C from Syntrophotalea carbinolica (strain DSM 2380 / NBRC 103641 / GraBd1) (Pelobacter carbinolicus).